Reading from the N-terminus, the 418-residue chain is CinA-like protein (418 aa).

This sequence belongs to the CinA family.

In Leptospira interrogans serogroup Icterohaemorrhagiae serovar Lai (strain 56601), this protein is CinA-like protein.